The chain runs to 394 residues: Protein arginine N-methyltransferase 8 (394 aa).

A lipid anchor (N-myristoyl glycine) is attached at Gly2. Positions 21–40 (VESTEVSSAPPQPPQPVIPA) are disordered. 2 short sequence motifs (SH3-binding) span residues 29-42 (APPQ…PAKP) and 53-58 (PSCPGR). Positions 30–39 (PPQPPQPVIP) are enriched in pro residues. Arg58 carries the post-translational modification Omega-N-methylarginine; by PRMT8. Arg73 is modified (asymmetric dimethylarginine; by PRMT8). Positions 73-394 (RDYYFDSYAH…TSVSNDYKMR (322 aa)) constitute an SAM-dependent MTase PRMT-type domain. Residues His86, Arg95, Gly119, 119–122 (GSGT), Glu141, and Glu170 contribute to the S-adenosyl-L-methionine site. Catalysis depends on residues Glu185 and Glu194.

The protein belongs to the class I-like SAM-binding methyltransferase superfamily. Protein arginine N-methyltransferase family. PRMT8 subfamily. As to quaternary structure, homodimer. Tetramer; individual homodimers associates to form a homotetramer. Homooctamer; individual homodimers associates to form a homooctamer and homooligomerization is required for proper localization to the cell membrane. Heterodimer with PRMT1; heterodimerization may recruit PRMT1 activity to the plasma membrane. Interacts with PRMT2 (via the SH3 domain). Interacts with FYN (via the SH3 domain). Interacts with EWS; independently of EWS methylation status. As to expression, brain-specific. Only expressed in neurons, especially in the somatosensory and limbic systems, and a part of motor system. Highly expressed in all of the regions related to general somatosensory system. Expressed in most of the relay nuclei intervening the special somatosensory system, such as the auditory, visual and vestibular systems. Also present in forebrain limbic areas and thalamic nuclei relevant to limbic areas and in areas related to the motor system, such as the caudate putamen, Purkinje cells, inferior olivary nucleus and cerebellar nuclei.

Its subcellular location is the cell membrane. The enzyme catalyses L-arginyl-[protein] + S-adenosyl-L-methionine = N(omega)-methyl-L-arginyl-[protein] + S-adenosyl-L-homocysteine + H(+). It carries out the reaction L-arginyl-[protein] + 2 S-adenosyl-L-methionine = N(omega),N(omega)-dimethyl-L-arginyl-[protein] + 2 S-adenosyl-L-homocysteine + 2 H(+). S-adenosyl-L-methionine-dependent and membrane-associated arginine methyltransferase that can both catalyze the formation of omega-N monomethylarginine (MMA) and asymmetrical dimethylarginine (aDMA) in proteins such as NIFK, myelin basic protein, histone H4, H2A and H2A/H2B dimer. Able to mono- and dimethylate EWS protein; however its precise role toward EWS remains unclear as it still interacts with fully methylated EWS. This chain is Protein arginine N-methyltransferase 8, found in Mus musculus (Mouse).